Consider the following 415-residue polypeptide: Serine hydroxymethyltransferase (415 aa).

(6S)-5,6,7,8-tetrahydrofolate is bound by residues Leu-115 and Gly-119–Leu-121. Lys-224 is modified (N6-(pyridoxal phosphate)lysine). Ser-348–Phe-350 lines the (6S)-5,6,7,8-tetrahydrofolate pocket.

Belongs to the SHMT family. In terms of assembly, homodimer. Requires pyridoxal 5'-phosphate as cofactor.

The protein resides in the cytoplasm. The catalysed reaction is (6R)-5,10-methylene-5,6,7,8-tetrahydrofolate + glycine + H2O = (6S)-5,6,7,8-tetrahydrofolate + L-serine. It functions in the pathway one-carbon metabolism; tetrahydrofolate interconversion. The protein operates within amino-acid biosynthesis; glycine biosynthesis; glycine from L-serine: step 1/1. Catalyzes the reversible interconversion of serine and glycine with tetrahydrofolate (THF) serving as the one-carbon carrier. This reaction serves as the major source of one-carbon groups required for the biosynthesis of purines, thymidylate, methionine, and other important biomolecules. Also exhibits THF-independent aldolase activity toward beta-hydroxyamino acids, producing glycine and aldehydes, via a retro-aldol mechanism. This Latilactobacillus sakei subsp. sakei (strain 23K) (Lactobacillus sakei subsp. sakei) protein is Serine hydroxymethyltransferase.